Here is a 453-residue protein sequence, read N- to C-terminus: MPHWAAVIMAAGKGTRMKSKLPKVMHTLAGKPMLQHVLDCVRSVEIPRSMVVLGHGREQIEATLDDRTEVVVQEEQCGTGHAIMQAIPHCHEVDHIIVLSGDQPLIRPETLRNLIRIHIEHNAAATLLTACFENPHGLGRILKEGDQFLRVVEEKDATPEERLVQEINTGTYCFNVAKLREALKNITPKNAQGEYYLTDVFAVFHAQGEVIRTYCTEDVHEALGINSRAQLAAAEDVARQRILSYWMEEGVTIIDPRSTFIEAGVVLQPDVVLQPFTILKGRTQVAEDAVIGPHTTLTDCTVGAGSEVSHTVGNQAVIGGHCTIGPYAYLRPGTVLQDKVKVGDFVEIKNSQIGEGSKIPHLSYVGDSQVGKSVNIGAGTITCNYDGVNKYKTIIRDKAFLGSNTNLVAPVEIGEGSVTGAGSTISKNVPANTLAIERSTQKHIENWVRNKKK.

Positions 1-228 (MPHWAAVIMA…VHEALGINSR (228 aa)) are pyrophosphorylase. UDP-N-acetyl-alpha-D-glucosamine is bound by residues Lys23, Gln73, 78–79 (GT), 100–102 (SGD), Gly139, Glu153, Asn168, and Asn226. Position 102 (Asp102) interacts with Mg(2+). Position 226 (Asn226) interacts with Mg(2+). A linker region spans residues 229–249 (AQLAAAEDVARQRILSYWMEE). The tract at residues 250–453 (GVTIIDPRST…IENWVRNKKK (204 aa)) is N-acetyltransferase. UDP-N-acetyl-alpha-D-glucosamine-binding residues include Arg331 and Lys349. The active-site Proton acceptor is the His361. UDP-N-acetyl-alpha-D-glucosamine-binding residues include Tyr364 and Asn375. Residues Ala378, 384 to 385 (NY), Ser403, Ala421, and Arg438 each bind acetyl-CoA.

This sequence in the N-terminal section; belongs to the N-acetylglucosamine-1-phosphate uridyltransferase family. It in the C-terminal section; belongs to the transferase hexapeptide repeat family. Homotrimer. Mg(2+) is required as a cofactor.

Its subcellular location is the cytoplasm. The enzyme catalyses alpha-D-glucosamine 1-phosphate + acetyl-CoA = N-acetyl-alpha-D-glucosamine 1-phosphate + CoA + H(+). It carries out the reaction N-acetyl-alpha-D-glucosamine 1-phosphate + UTP + H(+) = UDP-N-acetyl-alpha-D-glucosamine + diphosphate. Its pathway is nucleotide-sugar biosynthesis; UDP-N-acetyl-alpha-D-glucosamine biosynthesis; N-acetyl-alpha-D-glucosamine 1-phosphate from alpha-D-glucosamine 6-phosphate (route II): step 2/2. The protein operates within nucleotide-sugar biosynthesis; UDP-N-acetyl-alpha-D-glucosamine biosynthesis; UDP-N-acetyl-alpha-D-glucosamine from N-acetyl-alpha-D-glucosamine 1-phosphate: step 1/1. It participates in bacterial outer membrane biogenesis; LPS lipid A biosynthesis. Functionally, catalyzes the last two sequential reactions in the de novo biosynthetic pathway for UDP-N-acetylglucosamine (UDP-GlcNAc). The C-terminal domain catalyzes the transfer of acetyl group from acetyl coenzyme A to glucosamine-1-phosphate (GlcN-1-P) to produce N-acetylglucosamine-1-phosphate (GlcNAc-1-P), which is converted into UDP-GlcNAc by the transfer of uridine 5-monophosphate (from uridine 5-triphosphate), a reaction catalyzed by the N-terminal domain. This Desulfitobacterium hafniense (strain Y51) protein is Bifunctional protein GlmU.